Consider the following 210-residue polypeptide: Imidazole glycerol phosphate synthase subunit HisH (210 aa).

The 208-residue stretch at 3–210 folds into the Glutamine amidotransferase type-1 domain; sequence TIAIIDYGMG…ILKNFALSKA (208 aa). Cysteine 81 serves as the catalytic Nucleophile. Residues histidine 190 and glutamate 192 contribute to the active site.

In terms of assembly, heterodimer of HisH and HisF.

Its subcellular location is the cytoplasm. It catalyses the reaction 5-[(5-phospho-1-deoxy-D-ribulos-1-ylimino)methylamino]-1-(5-phospho-beta-D-ribosyl)imidazole-4-carboxamide + L-glutamine = D-erythro-1-(imidazol-4-yl)glycerol 3-phosphate + 5-amino-1-(5-phospho-beta-D-ribosyl)imidazole-4-carboxamide + L-glutamate + H(+). The catalysed reaction is L-glutamine + H2O = L-glutamate + NH4(+). Its pathway is amino-acid biosynthesis; L-histidine biosynthesis; L-histidine from 5-phospho-alpha-D-ribose 1-diphosphate: step 5/9. Functionally, IGPS catalyzes the conversion of PRFAR and glutamine to IGP, AICAR and glutamate. The HisH subunit catalyzes the hydrolysis of glutamine to glutamate and ammonia as part of the synthesis of IGP and AICAR. The resulting ammonia molecule is channeled to the active site of HisF. In Geobacter metallireducens (strain ATCC 53774 / DSM 7210 / GS-15), this protein is Imidazole glycerol phosphate synthase subunit HisH.